The sequence spans 224 residues: Large ribosomal subunit protein bL25 (224 aa).

The interval 196–224 (VEEVDTDAEEVDAADVPATEQGSEEDKGE) is disordered. The segment covering 197 to 208 (EEVDTDAEEVDA) has biased composition (acidic residues).

The protein belongs to the bacterial ribosomal protein bL25 family. CTC subfamily. In terms of assembly, part of the 50S ribosomal subunit; part of the 5S rRNA/L5/L18/L25 subcomplex. Contacts the 5S rRNA. Binds to the 5S rRNA independently of L5 and L18.

This is one of the proteins that binds to the 5S RNA in the ribosome where it forms part of the central protuberance. The protein is Large ribosomal subunit protein bL25 of Psychrobacter sp. (strain PRwf-1).